We begin with the raw amino-acid sequence, 108 residues long: Nucleoid-associated protein BPP1222 (108 aa).

The disordered stretch occupies residues 86–108 (TSQEKMASVTAGMPLPPGMKLPF). The span at 99–108 (PLPPGMKLPF) shows a compositional bias: pro residues.

The protein belongs to the YbaB/EbfC family. Homodimer.

The protein resides in the cytoplasm. The protein localises to the nucleoid. Binds to DNA and alters its conformation. May be involved in regulation of gene expression, nucleoid organization and DNA protection. This is Nucleoid-associated protein BPP1222 from Bordetella parapertussis (strain 12822 / ATCC BAA-587 / NCTC 13253).